The chain runs to 95 residues: Protein S100-A10 (95 aa).

N6-acetyllysine is present on residues Lys23, Lys28, Lys54, and Lys57. Residues 47-82 (KDPLAVDKIMKDLDQCRDGKVGFQSFLSLVAGLIIA) enclose the EF-hand domain. Residues 60–71 (DQCRDGKVGFQS) form an ancestral calcium site region.

Belongs to the S-100 family. In terms of assembly, heterotetramer containing 2 light chains of S100A10/p11 and 2 heavy chains of ANXA2/p36. Interacts with SCN10A. Interacts with TASOR.

Functionally, because S100A10 induces the dimerization of ANXA2/p36, it may function as a regulator of protein phosphorylation in that the ANXA2 monomer is the preferred target (in vitro) of tyrosine-specific kinase. This Rattus norvegicus (Rat) protein is Protein S100-A10 (S100a10).